Consider the following 287-residue polypeptide: 3-hydroxyanthranilate 3,4-dioxygenase (287 aa).

The segment at 1 to 163 (MTNQSLHVNI…SKENETGKPD (163 aa)) is domain A (catalytic). Residue Arg-46 participates in O2 binding. His-50, Glu-56, and His-94 together coordinate Fe cation. Glu-56 serves as a coordination point for substrate. Substrate is bound by residues Arg-98 and Glu-108. A linker region spans residues 164–180 (PANPIKPAPYPLNTMNV). Positions 181 to 287 (MTPFSFREWV…AQDPDRKRPY (107 aa)) are domain B.

Belongs to the 3-HAO family. Monomer. Fe(2+) serves as cofactor.

It localises to the cytoplasm. Its subcellular location is the cytosol. The enzyme catalyses 3-hydroxyanthranilate + O2 = (2Z,4Z)-2-amino-3-carboxymuconate 6-semialdehyde. Its pathway is cofactor biosynthesis; NAD(+) biosynthesis; quinolinate from L-kynurenine: step 3/3. Its function is as follows. Catalyzes the oxidative ring opening of 3-hydroxyanthranilate to 2-amino-3-carboxymuconate semialdehyde, which spontaneously cyclizes to quinolinate. In Danio rerio (Zebrafish), this protein is 3-hydroxyanthranilate 3,4-dioxygenase (haao).